We begin with the raw amino-acid sequence, 92 residues long: Small ribosomal subunit protein bS20 (92 aa).

Residues 1 to 20 (MANIASAKKRARQAENNRAH) form a disordered region.

This sequence belongs to the bacterial ribosomal protein bS20 family.

Binds directly to 16S ribosomal RNA. The chain is Small ribosomal subunit protein bS20 from Methylococcus capsulatus (strain ATCC 33009 / NCIMB 11132 / Bath).